The primary structure comprises 132 residues: Small ribosomal subunit protein eS24 (132 aa).

Positions 92–101 (LARHGLYEKK) are enriched in basic and acidic residues. Positions 92–132 (LARHGLYEKKRPTRKQRKERKNRMKKVRGTKKSKVGAAAKK) are disordered. Residues 102 to 132 (RPTRKQRKERKNRMKKVRGTKKSKVGAAAKK) are compositionally biased toward basic residues.

The protein belongs to the eukaryotic ribosomal protein eS24 family.

The chain is Small ribosomal subunit protein eS24 (RpS24) from Spodoptera frugiperda (Fall armyworm).